The sequence spans 446 residues: Deoxyguanosinetriphosphate triphosphohydrolase-like protein (446 aa).

A disordered region spans residues 1-28 (MSSSVWQERRHGEDKQRRNDHRSPFQRD). The segment covering 7 to 28 (QERRHGEDKQRRNDHRSPFQRD) has biased composition (basic and acidic residues). Residues 59 to 252 (RLTHSLEVSQ…MELADDIAYA (194 aa)) form the HD domain.

This sequence belongs to the dGTPase family. Type 2 subfamily.

The polypeptide is Deoxyguanosinetriphosphate triphosphohydrolase-like protein (Shewanella sp. (strain ANA-3)).